The primary structure comprises 87 residues: UPF0250 protein ECA1299 (87 aa).

It belongs to the UPF0250 family.

This chain is UPF0250 protein ECA1299, found in Pectobacterium atrosepticum (strain SCRI 1043 / ATCC BAA-672) (Erwinia carotovora subsp. atroseptica).